The following is a 572-amino-acid chain: Urease subunit alpha (572 aa).

Residues 130 to 572 form the Urease domain; the sequence is GGVDTHIHFI…LPMAQRYFLF (443 aa). The Ni(2+) site is built by histidine 135, histidine 137, and lysine 218. Lysine 218 carries the post-translational modification N6-carboxylysine. Histidine 220 is a binding site for substrate. Positions 247 and 273 each coordinate Ni(2+). Histidine 321 (proton donor) is an active-site residue. A Ni(2+)-binding site is contributed by aspartate 361.

It belongs to the metallo-dependent hydrolases superfamily. Urease alpha subunit family. Heterotrimer of UreA (gamma), UreB (beta) and UreC (alpha) subunits. Three heterotrimers associate to form the active enzyme. Ni cation is required as a cofactor. In terms of processing, carboxylation allows a single lysine to coordinate two nickel ions.

Its subcellular location is the cytoplasm. The catalysed reaction is urea + 2 H2O + H(+) = hydrogencarbonate + 2 NH4(+). Its pathway is nitrogen metabolism; urea degradation; CO(2) and NH(3) from urea (urease route): step 1/1. This is Urease subunit alpha from Ralstonia nicotianae (strain ATCC BAA-1114 / GMI1000) (Ralstonia solanacearum).